We begin with the raw amino-acid sequence, 229 residues long: UPF0173 metal-dependent hydrolase SERP1270 (229 aa).

Belongs to the UPF0173 family.

This Staphylococcus epidermidis (strain ATCC 35984 / DSM 28319 / BCRC 17069 / CCUG 31568 / BM 3577 / RP62A) protein is UPF0173 metal-dependent hydrolase SERP1270.